Here is a 143-residue protein sequence, read N- to C-terminus: Transcriptional regulator MraZ (143 aa).

2 consecutive SpoVT-AbrB domains span residues 5–47 and 76–119; these read EFEH…PLSE and AVQC…NKAR.

It belongs to the MraZ family. As to quaternary structure, forms oligomers.

It localises to the cytoplasm. Its subcellular location is the nucleoid. This Pediococcus pentosaceus (strain ATCC 25745 / CCUG 21536 / LMG 10740 / 183-1w) protein is Transcriptional regulator MraZ.